The primary structure comprises 434 residues: Sulfide-quinone reductase (434 aa).

Residues 8-12, 34-35, and 77-78 each bind FAD; these read GAGTG and SA. Cys-160 functions as the Cysteine persulfide intermediate in the catalytic mechanism. Residues Ile-302 and Gly-322 each coordinate FAD. Cys-356 serves as the catalytic Cysteine persulfide intermediate. Lys-391 lines the FAD pocket.

Belongs to the SQRD family. Homodimer. The cofactor is FAD.

Its subcellular location is the membrane. The catalysed reaction is n a quinone + n hydrogen sulfide + n H(+) = polysulfur(n-2) + n a quinol. In terms of biological role, catalyzes the oxidation of hydrogen sulfide, with the help of a quinone. Consecutive reaction cycles lead to the accumulation of a polysulfide product on the active site Cys residues; these products are released when they exceed a critical length, typically as cyclooctasulfur. In Acidithiobacillus ferrooxidans (strain ATCC 23270 / DSM 14882 / CIP 104768 / NCIMB 8455) (Ferrobacillus ferrooxidans (strain ATCC 23270)), this protein is Sulfide-quinone reductase.